A 307-amino-acid chain; its full sequence is CRISPR-associated endonuclease Cas1 2 (307 aa).

3 residues coordinate Mn(2+): Glu142, His206, and Glu221.

Belongs to the CRISPR-associated endonuclease Cas1 family. As to quaternary structure, homodimer, forms a heterotetramer with a Cas2 homodimer. Forms oligomers, probably binds nucleic acids as a homodimer. It depends on Mg(2+) as a cofactor. Mn(2+) serves as cofactor.

CRISPR (clustered regularly interspaced short palindromic repeat), is an adaptive immune system that provides protection against mobile genetic elements (viruses, transposable elements and conjugative plasmids). CRISPR clusters contain spacers, sequences complementary to antecedent mobile elements, and target invading nucleic acids. CRISPR clusters are transcribed and processed into CRISPR RNA (crRNA). Acts as a dsDNA endonuclease. Involved in the integration of spacer DNA into the CRISPR cassette. Functionally, in vitro catalyzes a concerted transesterification reaction on branched DNA, as would be expected during integration of protospacers into the CRISPR leader sequence; Cas2 is not required in vitro. This reaction requires a 3'-OH group at the branch point. Binds ss- and dsDNA and ss- and dsRNA with approximately equal affinity. May be able to anneal complementary DNA strands. The protein is CRISPR-associated endonuclease Cas1 2 of Saccharolobus solfataricus (strain ATCC 35092 / DSM 1617 / JCM 11322 / P2) (Sulfolobus solfataricus).